A 302-amino-acid chain; its full sequence is Mediator of RNA polymerase II transcription subunit 4 (302 aa).

The stretch at 98–145 (QLHANVEKIIAINDDLKSKIEELDRHRRLGENIKELEAESSNLDNTSK) forms a coiled coil. Positions 239–302 (GTTEEEKIQE…LFDSEDEFSD (64 aa)) are disordered. Basic and acidic residues predominate over residues 242–265 (EEEKIQEKKDEQVKKADKQQDTGI). The segment covering 268-278 (GSFGDYGSSSS) has biased composition (low complexity). Residues 292–302 (DLFDSEDEFSD) are compositionally biased toward acidic residues.

The protein belongs to the Mediator complex subunit 4 family. Component of the Mediator complex.

It is found in the nucleus. Functionally, component of the Mediator complex, a coactivator involved in the regulated transcription of nearly all RNA polymerase II-dependent genes. Mediator functions as a bridge to convey information from gene-specific regulatory proteins to the basal RNA polymerase II transcription machinery. Mediator is recruited to promoters by direct interactions with regulatory proteins and serves as a scaffold for the assembly of a functional preinitiation complex with RNA polymerase II and the general transcription factors. This chain is Mediator of RNA polymerase II transcription subunit 4 (MED4), found in Scheffersomyces stipitis (strain ATCC 58785 / CBS 6054 / NBRC 10063 / NRRL Y-11545) (Yeast).